A 396-amino-acid polypeptide reads, in one-letter code: CCA-adding enzyme (396 aa).

Gly32 and Arg35 together coordinate ATP. Positions 32 and 35 each coordinate CTP. Mg(2+)-binding residues include Asp45 and Asp47. ATP-binding residues include Arg116, Asp159, Arg162, Arg165, and Arg168. Arg116, Asp159, Arg162, Arg165, and Arg168 together coordinate CTP.

This sequence belongs to the tRNA nucleotidyltransferase/poly(A) polymerase family. Bacterial CCA-adding enzyme type 3 subfamily. In terms of assembly, homodimer. Mg(2+) serves as cofactor.

The enzyme catalyses a tRNA precursor + 2 CTP + ATP = a tRNA with a 3' CCA end + 3 diphosphate. It carries out the reaction a tRNA with a 3' CCA end + 2 CTP + ATP = a tRNA with a 3' CCACCA end + 3 diphosphate. Functionally, catalyzes the addition and repair of the essential 3'-terminal CCA sequence in tRNAs without using a nucleic acid template. Adds these three nucleotides in the order of C, C, and A to the tRNA nucleotide-73, using CTP and ATP as substrates and producing inorganic pyrophosphate. tRNA 3'-terminal CCA addition is required both for tRNA processing and repair. Also involved in tRNA surveillance by mediating tandem CCA addition to generate a CCACCA at the 3' terminus of unstable tRNAs. While stable tRNAs receive only 3'-terminal CCA, unstable tRNAs are marked with CCACCA and rapidly degraded. The chain is CCA-adding enzyme from Lactobacillus delbrueckii subsp. bulgaricus (strain ATCC BAA-365 / Lb-18).